A 414-amino-acid chain; its full sequence is MNFVTFNQDHSHLGVGTSNGYRVYTTDPFNKQSESREGDVSSLEMLFSTSLVALTLSPRVLRIQNTKGKRHSTICEMTFRTAILAMRLNRKRLVVVLESELYIYDISNMQMLRTEKTSPNPNAICALSASSENNYLIYPLPTKAAPATFQPPSHAPPKSDHIAPTSGEILIYDATKMEAVNVIEAHNSPLSCIALNNDGTLLATASEKGTIIRVFSIPDAQKLYQFRRGSIPARIFSMSFNSTSTLLSVSSATETVHIFRLGAPNTSRSNSISSGPTTLLSTSHQRSSSRTSEDISDEFGSSTADMAASERKPLNPTFASMIRRTSQTVGKSFAATVGGYLPSAVAEIWEPSRDFAWVKVPRSPNAASAGPVRTVVALSNNGPQIMVVTSEGNYYVFNVDLEKGGEGTLYKQYS.

WD repeat units lie at residues 1-34 (MNFV…KQSE), 69-114 (KRHS…MLRT), 139-182 (PLPT…AVNV), 185-225 (AHNS…KLYQ), and 230-269 (SIPA…TSRS). The L/FRRG motif signature appears at 226 to 230 (FRRGS). Residues 267–276 (SRSNSISSGP) show a composition bias toward polar residues. Residues 267-310 (SRSNSISSGPTTLLSTSHQRSSSRTSEDISDEFGSSTADMAASE) are disordered. Low complexity predominate over residues 277–290 (TTLLSTSHQRSSSR). WD repeat units lie at residues 317–359 (TFAS…AWVK) and 367–407 (ASAG…GGEG).

The protein belongs to the WD repeat PROPPIN family. Component of the PI(3,5)P2 regulatory complex.

It localises to the preautophagosomal structure membrane. It is found in the vacuole membrane. The protein resides in the endosome membrane. In terms of biological role, the PI(3,5)P2 regulatory complex regulates both the synthesis and turnover of phosphatidylinositol 3,5-bisphosphate (PtdIns(3,5)P2). Necessary for proper vacuole morphology. Plays an important role in osmotically-induced vacuole fragmentation. Required for cytoplasm to vacuole transport (Cvt) vesicle formation, pexophagy and starvation-induced autophagy. Involved in correct ATG9 trafficking to the pre-autophagosomal structure. Might also be involved in premeiotic DNA replication. This Phaeosphaeria nodorum (strain SN15 / ATCC MYA-4574 / FGSC 10173) (Glume blotch fungus) protein is Autophagy-related protein 18 (ATG18).